Reading from the N-terminus, the 177-residue chain is Large ribosomal subunit protein uL10 (177 aa).

It belongs to the universal ribosomal protein uL10 family. In terms of assembly, part of the ribosomal stalk of the 50S ribosomal subunit. The N-terminus interacts with L11 and the large rRNA to form the base of the stalk. The C-terminus forms an elongated spine to which L12 dimers bind in a sequential fashion forming a multimeric L10(L12)X complex.

Functionally, forms part of the ribosomal stalk, playing a central role in the interaction of the ribosome with GTP-bound translation factors. The chain is Large ribosomal subunit protein uL10 from Variovorax paradoxus (strain S110).